The sequence spans 423 residues: Probable sodium/metabolite cotransporter BASS4, chloroplastic (423 aa).

The transit peptide at Met1–Arg55 directs the protein to the chloroplast. The segment at Ala23–Pro45 is disordered. 9 consecutive transmembrane segments (helical) span residues Phe96 to Cys116, Leu123 to Arg140, Ala153 to Met173, Phe182 to Leu202, Leu212 to Leu232, Leu244 to Gly264, Gly284 to Val301, Ala315 to Ala335, and Leu389 to Val409.

This sequence belongs to the bile acid:sodium symporter (BASS) (TC 2.A.28) family.

It localises to the membrane. The protein localises to the plastid. Its subcellular location is the chloroplast envelope. May function as sodium-coupled metabolite transporter across the chloroplast envelope. The chain is Probable sodium/metabolite cotransporter BASS4, chloroplastic (BASS4) from Oryza sativa subsp. indica (Rice).